A 593-amino-acid polypeptide reads, in one-letter code: DNA primase (593 aa).

Residues 38-62 (CPFHQEKTPSFTVSDSKRFFYCFGC) form a CHC2-type zinc finger. In terms of domain architecture, Toprim spans 250–332 (NRSILVEGYF…EKKISFIRLP (83 aa)). The Mg(2+) site is built by Glu256, Asp300, and Asp302.

This sequence belongs to the DnaG primase family. In terms of assembly, monomer. Interacts with DnaB. It depends on Zn(2+) as a cofactor. Mg(2+) serves as cofactor.

It catalyses the reaction ssDNA + n NTP = ssDNA/pppN(pN)n-1 hybrid + (n-1) diphosphate.. In terms of biological role, RNA polymerase that catalyzes the synthesis of short RNA molecules used as primers for DNA polymerase during DNA replication. The protein is DNA primase of Rickettsia typhi (strain ATCC VR-144 / Wilmington).